Here is a 198-residue protein sequence, read N- to C-terminus: Recombination protein RecR (198 aa).

A C4-type zinc finger spans residues 57–72; sequence CSICGNLTDQDPCAIC. In terms of domain architecture, Toprim spans 80 to 175; it reads STILIVEDSR…KVTRLARGLA (96 aa).

This sequence belongs to the RecR family.

Functionally, may play a role in DNA repair. It seems to be involved in an RecBC-independent recombinational process of DNA repair. It may act with RecF and RecO. The chain is Recombination protein RecR from Streptococcus suis (strain 05ZYH33).